A 488-amino-acid chain; its full sequence is L-arabinose isomerase 1 (488 aa).

E306, E331, H348, and H447 together coordinate Mn(2+).

Belongs to the arabinose isomerase family. Mn(2+) serves as cofactor.

It carries out the reaction beta-L-arabinopyranose = L-ribulose. It functions in the pathway carbohydrate degradation; L-arabinose degradation via L-ribulose; D-xylulose 5-phosphate from L-arabinose (bacterial route): step 1/3. Its function is as follows. Catalyzes the conversion of L-arabinose to L-ribulose. This Clostridium acetobutylicum (strain ATCC 824 / DSM 792 / JCM 1419 / IAM 19013 / LMG 5710 / NBRC 13948 / NRRL B-527 / VKM B-1787 / 2291 / W) protein is L-arabinose isomerase 1.